Consider the following 278-residue polypeptide: 4-deoxy-L-threo-5-hexosulose-uronate ketol-isomerase (278 aa).

His-196, His-198, Glu-203, and His-245 together coordinate Zn(2+).

Belongs to the KduI family. Homohexamer. Zn(2+) serves as cofactor.

It catalyses the reaction 5-dehydro-4-deoxy-D-glucuronate = 3-deoxy-D-glycero-2,5-hexodiulosonate. The protein operates within glycan metabolism; pectin degradation; 2-dehydro-3-deoxy-D-gluconate from pectin: step 4/5. Its function is as follows. Catalyzes the isomerization of 5-dehydro-4-deoxy-D-glucuronate to 3-deoxy-D-glycero-2,5-hexodiulosonate. In Escherichia coli O8 (strain IAI1), this protein is 4-deoxy-L-threo-5-hexosulose-uronate ketol-isomerase.